A 478-amino-acid chain; its full sequence is Ribosomal RNA small subunit methyltransferase F (478 aa).

Residues 121–127 (ASAPGSK), Glu145, Asp172, and Asp190 each bind S-adenosyl-L-methionine. Cys243 acts as the Nucleophile in catalysis.

This sequence belongs to the class I-like SAM-binding methyltransferase superfamily. RsmB/NOP family.

It localises to the cytoplasm. The enzyme catalyses cytidine(1407) in 16S rRNA + S-adenosyl-L-methionine = 5-methylcytidine(1407) in 16S rRNA + S-adenosyl-L-homocysteine + H(+). Its function is as follows. Specifically methylates the cytosine at position 1407 (m5C1407) of 16S rRNA. The polypeptide is Ribosomal RNA small subunit methyltransferase F (Shewanella sediminis (strain HAW-EB3)).